We begin with the raw amino-acid sequence, 503 residues long: Aromatase (503 aa).

A run of 3 helical transmembrane segments spans residues glutamate 19–tryptophan 39, glycine 51–glycine 71, and methionine 303–alanine 323. The substrate site is built by aspartate 309 and methionine 374. Cysteine 437 contributes to the heme binding site.

Belongs to the cytochrome P450 family. Heme serves as cofactor.

It localises to the endoplasmic reticulum membrane. The protein localises to the microsome membrane. It carries out the reaction testosterone + 3 reduced [NADPH--hemoprotein reductase] + 3 O2 = 17beta-estradiol + formate + 3 oxidized [NADPH--hemoprotein reductase] + 4 H2O + 4 H(+). It catalyses the reaction androst-4-ene-3,17-dione + 3 reduced [NADPH--hemoprotein reductase] + 3 O2 = estrone + formate + 3 oxidized [NADPH--hemoprotein reductase] + 4 H2O + 4 H(+). The enzyme catalyses androst-4-ene-3,17-dione + reduced [NADPH--hemoprotein reductase] + O2 = 19-hydroxyandrost-4-ene-3,17-dione + oxidized [NADPH--hemoprotein reductase] + H2O + H(+). The catalysed reaction is 19-hydroxyandrost-4-ene-3,17-dione + reduced [NADPH--hemoprotein reductase] + O2 = 19-oxo-androst-4-ene-3,17-dione + oxidized [NADPH--hemoprotein reductase] + 2 H2O + H(+). It carries out the reaction 19-oxo-androst-4-ene-3,17-dione + reduced [NADPH--hemoprotein reductase] + O2 = estrone + formate + oxidized [NADPH--hemoprotein reductase] + H2O + 2 H(+). It catalyses the reaction estrone + reduced [NADPH--hemoprotein reductase] + O2 = 2-hydroxyestrone + oxidized [NADPH--hemoprotein reductase] + H2O + H(+). The enzyme catalyses 17beta-hydroxy-5alpha-androstan-3-one + reduced [NADPH--hemoprotein reductase] + O2 = 17beta,19-dihydroxy-3-oxo-5alpha-androstanone + oxidized [NADPH--hemoprotein reductase] + H2O + H(+). The catalysed reaction is 17beta,19-dihydroxy-3-oxo-5alpha-androstanone + reduced [NADPH--hemoprotein reductase] + O2 = 17beta-hydroxy-3,19-dioxo-5alpha-androstanone + oxidized [NADPH--hemoprotein reductase] + 2 H2O + H(+). It carries out the reaction 17beta-hydroxy-3,19-dioxo-5alpha-androstanone + reduced [NADPH--hemoprotein reductase] + O2 = 17beta-hydroxy-3-oxo-19-nor-5alpha-androst-1-ene + formate + oxidized [NADPH--hemoprotein reductase] + H2O + 2 H(+). It functions in the pathway steroid hormone biosynthesis. Its function is as follows. A cytochrome P450 monooxygenase that catalyzes the conversion of C19 androgens, androst-4-ene-3,17-dione (androstenedione) and testosterone to the C18 estrogens, estrone and estradiol, respectively. Catalyzes three successive oxidations of C19 androgens: two conventional oxidations at C19 yielding 19-hydroxy and 19-oxo/19-aldehyde derivatives, followed by a third oxidative aromatization step that involves C1-beta hydrogen abstraction combined with cleavage of the C10-C19 bond to yield a phenolic A ring and formic acid. Alternatively, the third oxidative reaction yields a 19-norsteroid and formic acid. Converts dihydrotestosterone to delta1,10-dehydro 19-nordihydrotestosterone and may play a role in homeostasis of this potent androgen. Also displays 2-hydroxylase activity toward estrone. Mechanistically, uses molecular oxygen inserting one oxygen atom into a substrate, and reducing the second into a water molecule, with two electrons provided by NADPH via cytochrome P450 reductase (CPR; NADPH-ferrihemoprotein reductase). This is Aromatase (CYP19A1) from Leucopleurus acutus (Atlantic white-sided dolphin).